The primary structure comprises 427 residues: Enolase (427 aa).

Q163 contributes to the (2R)-2-phosphoglycerate binding site. Catalysis depends on E205, which acts as the Proton donor. Mg(2+)-binding residues include D242, E285, and D312. K337, R366, S367, and K388 together coordinate (2R)-2-phosphoglycerate. The active-site Proton acceptor is the K337.

The protein belongs to the enolase family. Mg(2+) serves as cofactor.

It localises to the cytoplasm. The protein resides in the secreted. Its subcellular location is the cell surface. The catalysed reaction is (2R)-2-phosphoglycerate = phosphoenolpyruvate + H2O. The protein operates within carbohydrate degradation; glycolysis; pyruvate from D-glyceraldehyde 3-phosphate: step 4/5. Its function is as follows. Catalyzes the reversible conversion of 2-phosphoglycerate (2-PG) into phosphoenolpyruvate (PEP). It is essential for the degradation of carbohydrates via glycolysis. The sequence is that of Enolase from Methylocella silvestris (strain DSM 15510 / CIP 108128 / LMG 27833 / NCIMB 13906 / BL2).